We begin with the raw amino-acid sequence, 297 residues long: Vacuolar protein sorting-associated protein 26 (297 aa).

The protein belongs to the VPS26 family. In terms of assembly, component of the retromer complex, composed of VPS26, VPS29 and VPS35. As part of the retromer complex, interacts with the sorting receptor SORTLR/sortilin. Interacts with GTPase RAB7.

Plays a role in vesicular protein sorting. Component of the membrane-associated retromer complex which is essential in endosome-to-Golgi retrograde transport. This Plasmodium falciparum (isolate 3D7) protein is Vacuolar protein sorting-associated protein 26.